We begin with the raw amino-acid sequence, 349 residues long: Putative transport protein YhhT (349 aa).

Over 1–10 (METPQPDKTG) the chain is Cytoplasmic. Residues 11–31 (MHILLKLASLVVILAGIHAAA) traverse the membrane as a helical segment. Aspartate 32 is a topological domain (periplasmic). Residues 33-53 (IIVQLLLALFFAIVLNPLVTW) form a helical membrane-spanning segment. At 54-62 (FIRRGVQRP) the chain is on the cytoplasmic side. A helical transmembrane segment spans residues 63–83 (VAITIVVVVMLIALTALVGVL). Topologically, residues 84–142 (AASFNEFISMLPKFNKELTRKLFKLQEMLPFLNLHMSPERMLQRMDSEKVVTFTTALMT) are periplasmic. Residues 143–163 (GLSGAMASVLLLVMTVVFMLF) traverse the membrane as a helical segment. Residues 164-208 (EVRHVPYKMRFALNNPQIHIAGLHRALKGVSHYLALKTLLSLWTG) lie on the Cytoplasmic side of the membrane. A helical transmembrane segment spans residues 209–229 (VIVWLGLELMGVQFALMWAVL). Residues 230 to 234 (AFLLN) are Periplasmic-facing. A helical membrane pass occupies residues 235–255 (YVPNIGAVISAVPPMIQVLLF). Topologically, residues 256 to 257 (NG) are cytoplasmic. Residues 258 to 278 (VYECILVGALFLVVHMVIGNI) traverse the membrane as a helical segment. Topologically, residues 279–292 (LEPRMMGHRLGMST) are periplasmic. The helical transmembrane segment at 293 to 313 (MVVFLSLLIWGWLLGPVGMLL) threads the bilayer. Residues 314-349 (SVPLTSVCKIWMETTKGGSKLAILLGPGRPKSRLPG) are Cytoplasmic-facing.

The protein belongs to the autoinducer-2 exporter (AI-2E) (TC 2.A.86) family.

It is found in the cell inner membrane. The chain is Putative transport protein YhhT (yhhT) from Escherichia coli O157:H7.